The chain runs to 174 residues: Shikimate kinase 2 (174 aa).

12 to 17 (GCGKTT) provides a ligand contact to ATP. Threonine 16 and aspartate 32 together coordinate Mg(2+). Aspartate 34, arginine 58, and glycine 79 together coordinate substrate. Residues 112 to 126 (QAAPEEDLRPTLTGK) form an LID domain region. Arginine 120 lines the ATP pocket. Residue arginine 139 participates in substrate binding.

This sequence belongs to the shikimate kinase family. AroL subfamily. In terms of assembly, monomer. The cofactor is Mg(2+).

The protein localises to the cytoplasm. The catalysed reaction is shikimate + ATP = 3-phosphoshikimate + ADP + H(+). It participates in metabolic intermediate biosynthesis; chorismate biosynthesis; chorismate from D-erythrose 4-phosphate and phosphoenolpyruvate: step 5/7. Catalyzes the specific phosphorylation of the 3-hydroxyl group of shikimic acid using ATP as a cosubstrate. The protein is Shikimate kinase 2 of Shigella boydii serotype 18 (strain CDC 3083-94 / BS512).